The chain runs to 271 residues: Chitinase 6 (271 aa).

The first 20 residues, 1–20 (MARRLSLLAVVLAMVAAVSA), serve as a signal peptide directing secretion. One can recognise a Chitin-binding type-1 domain in the interval 25-60 (AQSCGCASDQCCSKWGFCGTGSDYCGTGCQAGPCDV). Disulfide bonds link cysteine 28-cysteine 36, cysteine 30-cysteine 42, cysteine 35-cysteine 49, cysteine 88-cysteine 137, cysteine 150-cysteine 159, and cysteine 239-cysteine 271. Glutamate 132 serves as the catalytic Proton donor. N-linked (GlcNAc...) asparagine glycosylation occurs at asparagine 268.

Belongs to the glycosyl hydrolase 19 family. Chitinase class IV subfamily. Expressed in roots, leaves, sheaths and meristems.

The enzyme catalyses Random endo-hydrolysis of N-acetyl-beta-D-glucosaminide (1-&gt;4)-beta-linkages in chitin and chitodextrins.. May function in reproductive organs during embryogenesis and seed maturation. The chain is Chitinase 6 (Cht6) from Oryza sativa subsp. japonica (Rice).